The sequence spans 460 residues: Squalene synthase (460 aa).

A helical membrane pass occupies residues 425-445; the sequence is ISILFVFFIILVCLAVIFYVF.

The protein belongs to the phytoene/squalene synthase family. As to quaternary structure, interacts with pof14. Mg(2+) serves as cofactor.

Its subcellular location is the endoplasmic reticulum membrane. It carries out the reaction 2 (2E,6E)-farnesyl diphosphate + NADPH + H(+) = squalene + 2 diphosphate + NADP(+). The catalysed reaction is 2 (2E,6E)-farnesyl diphosphate + NADH + H(+) = squalene + 2 diphosphate + NAD(+). It participates in terpene metabolism; lanosterol biosynthesis; lanosterol from farnesyl diphosphate: step 1/3. The protein operates within steroid metabolism; ergosterol biosynthesis. Squalene synthase; part of the third module of ergosterol biosynthesis pathway that includes by the late steps of the pathway. Erg9 produces squalene from 2 farnesyl pyrophosphate moieties. The third module or late pathway involves the ergosterol synthesis itself through consecutive reactions that mainly occur in the endoplasmic reticulum (ER) membrane. Firstly, the squalene synthase erg9 catalyzes the condensation of 2 farnesyl pyrophosphate moieties to form squalene, which is the precursor of all steroids. Secondly, squalene is converted into lanosterol by the consecutive action of the squalene epoxidase erg1 and the lanosterol synthase erg7. The lanosterol 14-alpha-demethylase erg11/cyp1 catalyzes C14-demethylation of lanosterol to produce 4,4'-dimethyl cholesta-8,14,24-triene-3-beta-ol. In the next steps, a complex process involving various demethylation, reduction and desaturation reactions catalyzed by the C-14 reductase erg24 and the C-4 demethylation complex erg25-erg26-erg27 leads to the production of zymosterol. Erg28 likely functions in the C-4 demethylation complex reaction by tethering erg26 and Erg27 to the endoplasmic reticulum or to facilitate interaction between these proteins. Then, the sterol 24-C-methyltransferase erg6 catalyzes the methyl transfer from S-adenosyl-methionine to the C-24 of zymosterol to form fecosterol. The C-8 sterol isomerase erg2 catalyzes the reaction which results in unsaturation at C-7 in the B ring of sterols and thus converts fecosterol to episterol. The sterol-C5-desaturases erg31 and erg32 then catalyze the introduction of a C-5 double bond in the B ring to produce 5-dehydroepisterol. The C-22 sterol desaturase erg5 further converts 5-dehydroepisterol into ergosta-5,7,22,24(28)-tetraen-3beta-ol by forming the C-22(23) double bond in the sterol side chain. Finally, ergosta-5,7,22,24(28)-tetraen-3beta-ol is substrate of the C-24(28) sterol reductase erg4 to produce ergosterol. In the genus Schizosaccharomyces, a second route exists between lanosterol and fecosterol, via the methylation of lanosterol to eburicol by erg6, followed by C14-demethylation by erg11/cyp1 and C4-demethylation by the demethylation complex erg25-erg26-erg27. This Schizosaccharomyces pombe (strain 972 / ATCC 24843) (Fission yeast) protein is Squalene synthase.